Consider the following 211-residue polypeptide: NADH-quinone oxidoreductase subunit I (211 aa).

Positions 1 to 27 (MANTDRPALPHKRAVPPSRADSGPRRR) are disordered. 4Fe-4S ferredoxin-type domains follow at residues 71-101 (LNRY…VEGA) and 117-146 (RVYQ…MTYD). C81, C84, C87, C91, C126, C129, C132, and C136 together coordinate [4Fe-4S] cluster.

Belongs to the complex I 23 kDa subunit family. NDH-1 is composed of 14 different subunits. Subunits NuoA, H, J, K, L, M, N constitute the membrane sector of the complex. Requires [4Fe-4S] cluster as cofactor.

The protein resides in the cell membrane. The enzyme catalyses a quinone + NADH + 5 H(+)(in) = a quinol + NAD(+) + 4 H(+)(out). Its function is as follows. NDH-1 shuttles electrons from NADH, via FMN and iron-sulfur (Fe-S) centers, to quinones in the respiratory chain. The immediate electron acceptor for the enzyme in this species is believed to be menaquinone. Couples the redox reaction to proton translocation (for every two electrons transferred, four hydrogen ions are translocated across the cytoplasmic membrane), and thus conserves the redox energy in a proton gradient. The chain is NADH-quinone oxidoreductase subunit I from Mycobacterium tuberculosis (strain ATCC 25177 / H37Ra).